Reading from the N-terminus, the 490-residue chain is UDP-N-acetylmuramate--L-alanine ligase (490 aa).

ATP is bound at residue 122–128 (GTHGKTS).

This sequence belongs to the MurCDEF family.

Its subcellular location is the cytoplasm. The enzyme catalyses UDP-N-acetyl-alpha-D-muramate + L-alanine + ATP = UDP-N-acetyl-alpha-D-muramoyl-L-alanine + ADP + phosphate + H(+). Its pathway is cell wall biogenesis; peptidoglycan biosynthesis. Its function is as follows. Cell wall formation. This is UDP-N-acetylmuramate--L-alanine ligase from Mycobacteroides abscessus (strain ATCC 19977 / DSM 44196 / CCUG 20993 / CIP 104536 / JCM 13569 / NCTC 13031 / TMC 1543 / L948) (Mycobacterium abscessus).